A 481-amino-acid polypeptide reads, in one-letter code: Cysteine--tRNA ligase (481 aa).

C29 serves as a coordination point for Zn(2+). The 'HIGH' region motif lies at 31–41 (VTVYDYCHIGH). Residues C209, H234, and E238 each contribute to the Zn(2+) site. The short motif at 266 to 270 (KMSKS) is the 'KMSKS' region element. K269 serves as a coordination point for ATP.

Belongs to the class-I aminoacyl-tRNA synthetase family. Monomer. Requires Zn(2+) as cofactor.

It localises to the cytoplasm. The catalysed reaction is tRNA(Cys) + L-cysteine + ATP = L-cysteinyl-tRNA(Cys) + AMP + diphosphate. This is Cysteine--tRNA ligase from Syntrophotalea carbinolica (strain DSM 2380 / NBRC 103641 / GraBd1) (Pelobacter carbinolicus).